A 525-amino-acid chain; its full sequence is tRNA(Ile)-lysidine synthase (525 aa).

Residue 32–37 (SGGRDS) participates in ATP binding.

Belongs to the tRNA(Ile)-lysidine synthase family.

Its subcellular location is the cytoplasm. It catalyses the reaction cytidine(34) in tRNA(Ile2) + L-lysine + ATP = lysidine(34) in tRNA(Ile2) + AMP + diphosphate + H(+). In terms of biological role, ligates lysine onto the cytidine present at position 34 of the AUA codon-specific tRNA(Ile) that contains the anticodon CAU, in an ATP-dependent manner. Cytidine is converted to lysidine, thus changing the amino acid specificity of the tRNA from methionine to isoleucine. In Psychrobacter sp. (strain PRwf-1), this protein is tRNA(Ile)-lysidine synthase.